Consider the following 113-residue polypeptide: Iron-sulfur cluster insertion protein ErpA (113 aa).

Cys-41, Cys-105, and Cys-107 together coordinate iron-sulfur cluster.

Belongs to the HesB/IscA family. In terms of assembly, homodimer. It depends on iron-sulfur cluster as a cofactor.

Its function is as follows. Required for insertion of 4Fe-4S clusters for at least IspG. The chain is Iron-sulfur cluster insertion protein ErpA from Vibrio parahaemolyticus serotype O3:K6 (strain RIMD 2210633).